The primary structure comprises 130 residues: Putative protein ZNF815 (130 aa).

The protein is Putative protein ZNF815 (ZNF815P) of Homo sapiens (Human).